The primary structure comprises 124 residues: Large ribosomal subunit protein bL12 (124 aa).

This sequence belongs to the bacterial ribosomal protein bL12 family. Homodimer. Part of the ribosomal stalk of the 50S ribosomal subunit. Forms a multimeric L10(L12)X complex, where L10 forms an elongated spine to which 2 to 4 L12 dimers bind in a sequential fashion. Binds GTP-bound translation factors.

In terms of biological role, forms part of the ribosomal stalk which helps the ribosome interact with GTP-bound translation factors. Is thus essential for accurate translation. This Desulforamulus reducens (strain ATCC BAA-1160 / DSM 100696 / MI-1) (Desulfotomaculum reducens) protein is Large ribosomal subunit protein bL12.